The primary structure comprises 602 residues: UvrABC system protein C (602 aa).

The GIY-YIG domain occupies 17–94; that stretch reads KTSGCYKMYS…IKKYKPTYNI (78 aa). One can recognise a UVR domain in the interval 199-234; the sequence is SKLLNDIEIKMKEVIMKENFEAAIKLKETKKSLIEI.

This sequence belongs to the UvrC family. As to quaternary structure, interacts with UvrB in an incision complex.

The protein localises to the cytoplasm. Its function is as follows. The UvrABC repair system catalyzes the recognition and processing of DNA lesions. UvrC both incises the 5' and 3' sides of the lesion. The N-terminal half is responsible for the 3' incision and the C-terminal half is responsible for the 5' incision. This is UvrABC system protein C from Borrelia recurrentis (strain A1).